We begin with the raw amino-acid sequence, 63 residues long: Metallothionein-like protein type 3 (63 aa).

It belongs to the metallothionein superfamily. Type 15 family.

Metallothioneins have a high content of cysteine residues that bind various heavy metals. The polypeptide is Metallothionein-like protein type 3 (Actinidia deliciosa (Kiwi)).